Consider the following 378-residue polypeptide: Lipoyl synthase, mitochondrial (378 aa).

[4Fe-4S] cluster is bound by residues Cys97, Cys102, Cys108, Cys128, Cys132, Cys135, and Ser343. Positions 111-332 (GSDKSAATAT…RQRALDMGFL (222 aa)) constitute a Radical SAM core domain.

It belongs to the radical SAM superfamily. Lipoyl synthase family. [4Fe-4S] cluster is required as a cofactor.

The protein localises to the mitochondrion. The catalysed reaction is [[Fe-S] cluster scaffold protein carrying a second [4Fe-4S](2+) cluster] + N(6)-octanoyl-L-lysyl-[protein] + 2 oxidized [2Fe-2S]-[ferredoxin] + 2 S-adenosyl-L-methionine + 4 H(+) = [[Fe-S] cluster scaffold protein] + N(6)-[(R)-dihydrolipoyl]-L-lysyl-[protein] + 4 Fe(3+) + 2 hydrogen sulfide + 2 5'-deoxyadenosine + 2 L-methionine + 2 reduced [2Fe-2S]-[ferredoxin]. Its pathway is protein modification; protein lipoylation via endogenous pathway; protein N(6)-(lipoyl)lysine from octanoyl-[acyl-carrier-protein]: step 2/2. Catalyzes the radical-mediated insertion of two sulfur atoms into the C-6 and C-8 positions of the octanoyl moiety bound to the lipoyl domains of lipoate-dependent enzymes, thereby converting the octanoylated domains into lipoylated derivatives. This is Lipoyl synthase, mitochondrial from Phaeosphaeria nodorum (strain SN15 / ATCC MYA-4574 / FGSC 10173) (Glume blotch fungus).